Reading from the N-terminus, the 761-residue chain is Elongation factor G, mitochondrial (761 aa).

Residues 1–33 (MTSVLRGVLKTHLPRTLTLPRCARNFQTTTFLR) constitute a mitochondrion transit peptide. Residues 66–347 (TRLRNIGISA…SVVDYLPQPN (282 aa)) form the tr-type G domain. GTP contacts are provided by residues 75–82 (AHIDSGKT), 146–150 (DTPGH), and 200–203 (NKMD).

The protein belongs to the TRAFAC class translation factor GTPase superfamily. Classic translation factor GTPase family. EF-G/EF-2 subfamily.

The protein localises to the mitochondrion. It participates in protein biosynthesis; polypeptide chain elongation. Mitochondrial GTPase that catalyzes the GTP-dependent ribosomal translocation step during translation elongation. During this step, the ribosome changes from the pre-translocational (PRE) to the post-translocational (POST) state as the newly formed A-site-bound peptidyl-tRNA and P-site-bound deacylated tRNA move to the P and E sites, respectively. Catalyzes the coordinated movement of the two tRNA molecules, the mRNA and conformational changes in the ribosome. This is Elongation factor G, mitochondrial from Candida dubliniensis (strain CD36 / ATCC MYA-646 / CBS 7987 / NCPF 3949 / NRRL Y-17841) (Yeast).